Reading from the N-terminus, the 463-residue chain is ATP synthase subunit beta (463 aa).

Residue 151–158 participates in ATP binding; sequence GGAGVGKT.

Belongs to the ATPase alpha/beta chains family. In terms of assembly, F-type ATPases have 2 components, CF(1) - the catalytic core - and CF(0) - the membrane proton channel. CF(1) has five subunits: alpha(3), beta(3), gamma(1), delta(1), epsilon(1). CF(0) has three main subunits: a(1), b(2) and c(9-12). The alpha and beta chains form an alternating ring which encloses part of the gamma chain. CF(1) is attached to CF(0) by a central stalk formed by the gamma and epsilon chains, while a peripheral stalk is formed by the delta and b chains.

The protein localises to the cell membrane. The enzyme catalyses ATP + H2O + 4 H(+)(in) = ADP + phosphate + 5 H(+)(out). In terms of biological role, produces ATP from ADP in the presence of a proton gradient across the membrane. The catalytic sites are hosted primarily by the beta subunits. The chain is ATP synthase subunit beta from Clostridium botulinum (strain Loch Maree / Type A3).